Consider the following 213-residue polypeptide: 5-methylthioribulose-1-phosphate/5-deoxyribulose-1-phosphate aldolase (213 aa).

The active-site Proton donor/acceptor is the glutamate 73. Co(2+)-binding residues include glutamate 73, histidine 92, histidine 94, and histidine 155.

This sequence belongs to the aldolase class II family. It depends on Co(2+) as a cofactor.

It carries out the reaction 5-(methylsulfanyl)-D-ribulose 1-phosphate = 2-(methylsulfanyl)acetaldehyde + dihydroxyacetone phosphate. The catalysed reaction is 5-deoxy-D-ribulose 1-phosphate = dihydroxyacetone phosphate + acetaldehyde. It functions in the pathway amino-acid biosynthesis; L-methionine biosynthesis via salvage pathway. Functionally, uses 5-methylthioribulose-1-phosphate to yield 2-(methylthio)acetaldehyde and dihydroxyacetone phosphate. Can also use 5-deoxyribulose 1-phosphate to yield acetaldehyde and dihydroxyacetone phosphate. Part of a bifunctional DHAP-shunt salvage pathway for SAM by-products. The sequence is that of 5-methylthioribulose-1-phosphate/5-deoxyribulose-1-phosphate aldolase from Escherichia coli O45:K1 (strain S88 / ExPEC).